The primary structure comprises 80 residues: U6-ctenitoxin-Pn1a (80 aa).

The first 21 residues, 1 to 21, serve as a signal peptide directing secretion; the sequence is MWLKIQVFVLALALITLGIQA. Residues 22-37 constitute a propeptide that is removed on maturation; that stretch reads EPNSGPNNPLIQEEAR. 4 cysteine pairs are disulfide-bonded: Cys39–Cys54, Cys46–Cys59, Cys53–Cys69, and Cys61–Cys67. The propeptide occupies 72–80; sequence TLGDLFGRR.

Belongs to the neurotoxin 02 (plectoxin) family. 01 (Tx3) subfamily. Expressed by the venom gland.

The protein localises to the secreted. Functionally, antagonist of L-type calcium channels (Cav1/CACNA1). This chain is U6-ctenitoxin-Pn1a, found in Phoneutria nigriventer (Brazilian armed spider).